A 305-amino-acid chain; its full sequence is MADEHQFIHDGLQRTQIDEFFSEELSRAGYGGMEVAKTPMGTQIVLKAEKPGMVIGKGGKNIRKITTTLEEEFGLEDPQVDVQEVDEPDLNAQIVADRLANALERGWYFRKAGHTTIDRIMESGALGAEIILSGKVTGARSRVEKFNRGYIKHNGEPAESIVDSGVGTAVMKLGTIGVQVKIIPPEAELPDDFEVYEDIEVEDFVEEPEGDVEELLEAPEDAEAESVGADPEEVIEEETEAEAVEEVAEEEIIDEEGVEAETGDAPTSPPDAAEEPDEALDEDVEAEAEELLDEMEDETTDEEET.

The KH type-2 domain maps to 17–86 (IDEFFSEELS…DPQVDVQEVD (70 aa)). Acidic residues-rich tracts occupy residues 207-262 (EPEG…EAET) and 272-305 (AAEE…EEET). Residues 207 to 305 (EPEGDVEELL…EDETTDEEET (99 aa)) form a disordered region.

This sequence belongs to the universal ribosomal protein uS3 family. In terms of assembly, part of the 30S ribosomal subunit.

Its function is as follows. Binds the lower part of the 30S subunit head. This chain is Small ribosomal subunit protein uS3, found in Natronomonas pharaonis (strain ATCC 35678 / DSM 2160 / CIP 103997 / JCM 8858 / NBRC 14720 / NCIMB 2260 / Gabara) (Halobacterium pharaonis).